Reading from the N-terminus, the 590-residue chain is Hyaluronan synthase 1 (590 aa).

Topologically, residues 1–31 are cytoplasmic; it reads MKDKAAATMEIPEDPGIPKNLERKRPIVWRM. The chain crosses the membrane as a helical span at residues 32–52; it reads IYYSFAVLLLAAFTAAYVTEF. Residues 53-60 are Extracellular-facing; it reads QILTHEDV. Residues 61 to 81 traverse the membrane as a helical segment; sequence LFSLGLYGLVMFLHLMMQSLF. Topologically, residues 82–401 are cytoplasmic; that stretch reads AYLEIRRINK…YNAQWWYKHH (320 aa). The helical transmembrane segment at 402–422 threads the bilayer; that stretch reads IWMTYESVVHFIFPFFITATV. At 423–425 the chain is on the extracellular side; the sequence is IRL. The chain crosses the membrane as a helical span at residues 426-446; sequence LYASTIWNVVWLLLCIQIMSV. Over 447 to 456 the chain is Cytoplasmic; sequence LKSLYACWLR. The chain crosses the membrane as a helical span at residues 457-477; that stretch reads GNPIMLLMSLYSMLYMTGLLP. Residues 478-505 lie on the Extracellular side of the membrane; sequence SKYFAMLTINKSGWGTSGRKKIVGNYMP. The chain crosses the membrane as a helical span at residues 506–526; it reads VLPLSIWMAVLCGGVGYSIYM. Topologically, residues 527 to 543 are cytoplasmic; sequence DCHQDWSTPEKQKELYH. A helical membrane pass occupies residues 544 to 564; the sequence is LLYGCISYTLYWVLMALMYWV. The Extracellular segment spans residues 565 to 588; sequence WVKRCCRKRSQTVTLVHDIPERLV.

It belongs to the NodC/HAS family. The cofactor is Mg(2+).

The protein localises to the membrane. The enzyme catalyses [hyaluronan](n) + UDP-N-acetyl-alpha-D-glucosamine = N-acetyl-beta-D-glucosaminyl-(1-&gt;4)-[hyaluronan](n) + UDP + H(+). It catalyses the reaction N-acetyl-beta-D-glucosaminyl-(1-&gt;4)-[hyaluronan](n) + UDP-alpha-D-glucuronate = [hyaluronan](n+1) + UDP + H(+). It participates in glycan biosynthesis; hyaluronan biosynthesis. Functionally, catalyzes the addition of GlcNAc or GlcUA monosaccharides to the nascent hyaluronan polymer. Therefore, it is essential to hyaluronan synthesis a major component of most extracellular matrices that has a structural role in tissues architectures and regulates cell adhesion, migration and differentiation. Also able to catalyze the synthesis of chito-oligosaccharide depending on the substrate. The sequence is that of Hyaluronan synthase 1 (has1) from Xenopus tropicalis (Western clawed frog).